Here is a 204-residue protein sequence, read N- to C-terminus: uncharacterized protein (204 aa).

The segment at 77–111 (APHGSRIPGRCRRSPRCSRRPGGSRLRGGTWTPRL) is disordered. Residues 85 to 95 (GRCRRSPRCSR) show a composition bias toward basic residues. Over residues 96–105 (RPGGSRLRGG) the composition is skewed to low complexity.

This is an uncharacterized protein from Homo sapiens (Human).